Here is a 155-residue protein sequence, read N- to C-terminus: Leader peptidase HopD (155 aa).

Belongs to the peptidase A24 family.

In Escherichia coli, this protein is Leader peptidase HopD (hopD).